We begin with the raw amino-acid sequence, 103 residues long: uncharacterized protein (103 aa).

Residues 69-103 are disordered; the sequence is SSISYPGGGGGGGGSAKSLSSSKPGGGGGSPLIFL. Gly residues-rich tracts occupy residues 74 to 83 and 92 to 103; these read PGGGGGGGGS and PGGGGGSPLIFL.

This is an uncharacterized protein from Saccharomyces cerevisiae (strain ATCC 204508 / S288c) (Baker's yeast).